The sequence spans 459 residues: Chromosomal replication initiator protein DnaA (459 aa).

Residues methionine 1 to histidine 73 are domain I, interacts with DnaA modulators. Residues histidine 73 to threonine 117 are domain II. Residues glutamate 118–isoleucine 334 are domain III, AAA+ region. ATP contacts are provided by glycine 162, glycine 164, lysine 165, and threonine 166. The interval serine 335–serine 459 is domain IV, binds dsDNA.

It belongs to the DnaA family. Oligomerizes as a right-handed, spiral filament on DNA at oriC.

Its subcellular location is the cytoplasm. Plays an essential role in the initiation and regulation of chromosomal replication. ATP-DnaA binds to the origin of replication (oriC) to initiate formation of the DNA replication initiation complex once per cell cycle. Binds the DnaA box (a 9 base pair repeat at the origin) and separates the double-stranded (ds)DNA. Forms a right-handed helical filament on oriC DNA; dsDNA binds to the exterior of the filament while single-stranded (ss)DNA is stabiized in the filament's interior. The ATP-DnaA-oriC complex binds and stabilizes one strand of the AT-rich DNA unwinding element (DUE), permitting loading of DNA polymerase. After initiation quickly degrades to an ADP-DnaA complex that is not apt for DNA replication. Binds acidic phospholipids. The sequence is that of Chromosomal replication initiator protein DnaA from Nostoc punctiforme (strain ATCC 29133 / PCC 73102).